The sequence spans 488 residues: Sterol 14-demethylase (488 aa).

Residues 12–32 (TGLVIVATLVIAKLIFSFFTS) traverse the membrane as a helical segment. Cys433 is a binding site for heme.

Belongs to the cytochrome P450 family. Heme is required as a cofactor. In terms of tissue distribution, expressed in leaves, roots, stems, siliques, flowers, flower buds and seedlings.

The protein localises to the membrane. The enzyme catalyses a 14alpha-methyl steroid + 3 reduced [NADPH--hemoprotein reductase] + 3 O2 = a Delta(14) steroid + formate + 3 oxidized [NADPH--hemoprotein reductase] + 4 H2O + 4 H(+). Functionally, involved in sterol biosynthesis. Catalyzes the 14-alpha demethylation of obtusifoliol to 4 alpha-methyl-5 alpha-ergosta-8,14,24(28)-trien-3 beta-ol. The chain is Sterol 14-demethylase (CYP51G1) from Arabidopsis thaliana (Mouse-ear cress).